The primary structure comprises 642 residues: Threonine--tRNA ligase (642 aa).

The TGS domain occupies 1 to 61; the sequence is MPVITLPDGS…ETDAELSIIT (61 aa). Residues 243–534 are catalytic; the sequence is DHRKIGKQLD…LIEEYAGRFP (292 aa). Positions 334, 385, and 511 each coordinate Zn(2+).

Belongs to the class-II aminoacyl-tRNA synthetase family. Homodimer. Requires Zn(2+) as cofactor.

Its subcellular location is the cytoplasm. It catalyses the reaction tRNA(Thr) + L-threonine + ATP = L-threonyl-tRNA(Thr) + AMP + diphosphate + H(+). Its function is as follows. Catalyzes the attachment of threonine to tRNA(Thr) in a two-step reaction: L-threonine is first activated by ATP to form Thr-AMP and then transferred to the acceptor end of tRNA(Thr). Also edits incorrectly charged L-seryl-tRNA(Thr). This chain is Threonine--tRNA ligase, found in Shewanella baltica (strain OS155 / ATCC BAA-1091).